Reading from the N-terminus, the 126-residue chain is Phosphoribosyl-AMP cyclohydrolase (126 aa).

Asp-82 is a binding site for Mg(2+). Cys-83 contacts Zn(2+). Mg(2+) contacts are provided by Asp-84 and Asp-86. Residues Cys-99 and Cys-106 each contribute to the Zn(2+) site.

The protein belongs to the PRA-CH family. As to quaternary structure, homodimer. It depends on Mg(2+) as a cofactor. Zn(2+) is required as a cofactor.

It is found in the cytoplasm. The enzyme catalyses 1-(5-phospho-beta-D-ribosyl)-5'-AMP + H2O = 1-(5-phospho-beta-D-ribosyl)-5-[(5-phospho-beta-D-ribosylamino)methylideneamino]imidazole-4-carboxamide. It participates in amino-acid biosynthesis; L-histidine biosynthesis; L-histidine from 5-phospho-alpha-D-ribose 1-diphosphate: step 3/9. Catalyzes the hydrolysis of the adenine ring of phosphoribosyl-AMP. In Sphingopyxis alaskensis (strain DSM 13593 / LMG 18877 / RB2256) (Sphingomonas alaskensis), this protein is Phosphoribosyl-AMP cyclohydrolase.